The primary structure comprises 235 residues: Ubiquinone biosynthesis O-methyltransferase (235 aa).

The S-adenosyl-L-methionine site is built by Arg-36, Gly-56, Asp-77, and Met-122.

This sequence belongs to the methyltransferase superfamily. UbiG/COQ3 family.

The catalysed reaction is a 3-demethylubiquinol + S-adenosyl-L-methionine = a ubiquinol + S-adenosyl-L-homocysteine + H(+). It catalyses the reaction a 3-(all-trans-polyprenyl)benzene-1,2-diol + S-adenosyl-L-methionine = a 2-methoxy-6-(all-trans-polyprenyl)phenol + S-adenosyl-L-homocysteine + H(+). It participates in cofactor biosynthesis; ubiquinone biosynthesis. Its function is as follows. O-methyltransferase that catalyzes the 2 O-methylation steps in the ubiquinone biosynthetic pathway. This chain is Ubiquinone biosynthesis O-methyltransferase, found in Leptothrix cholodnii (strain ATCC 51168 / LMG 8142 / SP-6) (Leptothrix discophora (strain SP-6)).